We begin with the raw amino-acid sequence, 569 residues long: Urease subunit beta (569 aa).

The Urease domain occupies 131–569 (GGIDTHIHFI…VSLAQLFSIF (439 aa)). The Ni(2+) site is built by His136, His138, and Lys219. Position 219 is an N6-carboxylysine (Lys219). A substrate-binding site is contributed by His221. Positions 248 and 274 each coordinate Ni(2+). The active-site Proton donor is the His322. Asp362 serves as a coordination point for Ni(2+).

This sequence belongs to the metallo-dependent hydrolases superfamily. Urease alpha subunit family. As to quaternary structure, heterohexamer of 3 UreA (alpha) and 3 UreB (beta) subunits. Ni cation serves as cofactor. Post-translationally, carboxylation allows a single lysine to coordinate two nickel ions.

The protein localises to the cytoplasm. It catalyses the reaction urea + 2 H2O + H(+) = hydrogencarbonate + 2 NH4(+). It functions in the pathway nitrogen metabolism; urea degradation; CO(2) and NH(3) from urea (urease route): step 1/1. The sequence is that of Urease subunit beta from Helicobacter pylori (strain HPAG1).